Here is a 425-residue protein sequence, read N- to C-terminus: Formyl-CoA:oxalate CoA-transferase (425 aa).

CoA-binding positions include 17–18, Arg38, 72–75, 96–98, Arg104, and 136–139; these read QS, LDTK, NFG, and KVYE. Residue Asp168 is the Nucleophile of the active site. Substrate is bound at residue 247–249; that stretch reads GGQ.

Belongs to the CoA-transferase III family. Frc subfamily. Homodimer.

The catalysed reaction is formyl-CoA + oxalate = oxalyl-CoA + formate. The protein operates within metabolic intermediate degradation; oxalate degradation; CO(2) and formate from oxalate: step 1/2. Functionally, involved in the catabolism of oxalate and in the adapatation to low pH via the induction of the oxalate-dependent acid tolerance response (ATR). Catalyzes the transfer of the CoA moiety from formyl-CoA to oxalate. This is Formyl-CoA:oxalate CoA-transferase from Bradyrhizobium sp. (strain ORS 278).